A 332-amino-acid chain; its full sequence is Biotin synthase (332 aa).

The Radical SAM core domain occupies 53–282 (HFGKKVKLNM…TKEIRISGGR (230 aa)). Residues cysteine 71, cysteine 75, and cysteine 78 each coordinate [4Fe-4S] cluster. Cysteine 115, cysteine 147, cysteine 207, and arginine 277 together coordinate [2Fe-2S] cluster.

This sequence belongs to the radical SAM superfamily. Biotin synthase family. Homodimer. Requires [4Fe-4S] cluster as cofactor. The cofactor is [2Fe-2S] cluster.

The enzyme catalyses (4R,5S)-dethiobiotin + (sulfur carrier)-SH + 2 reduced [2Fe-2S]-[ferredoxin] + 2 S-adenosyl-L-methionine = (sulfur carrier)-H + biotin + 2 5'-deoxyadenosine + 2 L-methionine + 2 oxidized [2Fe-2S]-[ferredoxin]. It participates in cofactor biosynthesis; biotin biosynthesis; biotin from 7,8-diaminononanoate: step 2/2. Functionally, catalyzes the conversion of dethiobiotin (DTB) to biotin by the insertion of a sulfur atom into dethiobiotin via a radical-based mechanism. This chain is Biotin synthase, found in Bacillus cereus (strain G9842).